We begin with the raw amino-acid sequence, 397 residues long: Neuroplastin (397 aa).

Positions 1 to 28 are cleaved as a signal peptide; sequence MSGSSLPGALALSLLLVSGSLLPGPGAA. Ig-like domains follow at residues 29 to 134, 148 to 234, and 237 to 327; these read QNAG…PSIT, PRIV…IEVK, and PDIT…ASVS. Topologically, residues 29–338 are extracellular; the sequence is QNAGFVKSPM…VLRVRSHLAP (310 aa). A disulfide bond links Cys52 and Cys116. Residues 149-161 are narpin; mediates binding with FGFR1 and has antidepressant-like activity; that stretch reads RIVTSEEVIIRES. A disulfide bridge links Cys169 with Cys217. N-linked (GlcNAc...) asparagine glycans are attached at residues Asn170, Asn196, Asn228, Asn283, Asn295, and Asn316. A disulfide bond links Cys258 and Cys315. Residues 339 to 359 form a helical membrane-spanning segment; the sequence is LWPFLGILAEIIILVVIIVVY. Over 360-397 the chain is Cytoplasmic; sequence EKRKRPDEVPDDDEPAGPMKTNSTNNHKDKNLRQRNTN. A disordered region spans residues 364 to 397; sequence RPDEVPDDDEPAGPMKTNSTNNHKDKNLRQRNTN.

Interacts with ATP2B1; this interaction stabilizes ATP2B1 and increases ATPase activity; this interaction controls T cell calcium homeostasis following T cell activation. Interacts with XKR8; promoting its localization at the cell membrane. Post-translationally, N-glycosylated. In terms of tissue distribution, isoform 1 and isoform 2 are widely expressed with variable levels in brain. Isoform 1 is expressed in cerebellum and midbrain. Isoform 1 and isoform 2 are expressed in cerebral cortex, hippocampus and striatum. Isoform 2 is more abundant in the cerebral cortex than isoform 1.

The protein resides in the cell membrane. The protein localises to the postsynaptic density. Probable homophilic and heterophilic cell adhesion molecule involved in long term potentiation at hippocampal excitatory synapses through activation of p38MAPK. May also regulate neurite outgrowth by activating the FGFR1 signaling pathway. May play a role in synaptic plasticity. Also acts as a chaperone for ATP2B1; stabilizes ATP2B1 and increases its ATPase activity. Promotes localization of XKR8 at the cell membrane. This chain is Neuroplastin (Nptn), found in Mus musculus (Mouse).